The chain runs to 376 residues: Chaperone protein DnaJ (376 aa).

The J domain maps to 5 to 70 (DFYEVLGVER…SKRAAYDQYG (66 aa)). Residues 135 to 213 (GTTVTIRVPT…CHGQGRVEEQ (79 aa)) form a CR-type zinc finger. Zn(2+) is bound by residues cysteine 148, cysteine 151, cysteine 165, cysteine 168, cysteine 187, cysteine 190, cysteine 201, and cysteine 204. CXXCXGXG motif repeat units lie at residues 148 to 155 (CKTCDGSG), 165 to 172 (CTTCGGIG), 187 to 194 (CPRCHGSG), and 201 to 208 (CGSCHGQG).

The protein belongs to the DnaJ family. In terms of assembly, homodimer. Requires Zn(2+) as cofactor.

Its subcellular location is the cytoplasm. Functionally, participates actively in the response to hyperosmotic and heat shock by preventing the aggregation of stress-denatured proteins and by disaggregating proteins, also in an autonomous, DnaK-independent fashion. Unfolded proteins bind initially to DnaJ; upon interaction with the DnaJ-bound protein, DnaK hydrolyzes its bound ATP, resulting in the formation of a stable complex. GrpE releases ADP from DnaK; ATP binding to DnaK triggers the release of the substrate protein, thus completing the reaction cycle. Several rounds of ATP-dependent interactions between DnaJ, DnaK and GrpE are required for fully efficient folding. Also involved, together with DnaK and GrpE, in the DNA replication of plasmids through activation of initiation proteins. This chain is Chaperone protein DnaJ, found in Stutzerimonas stutzeri (Pseudomonas stutzeri).